Reading from the N-terminus, the 364-residue chain is Probable dual-specificity RNA methyltransferase RlmN (364 aa).

Glutamate 107 serves as the catalytic Proton acceptor. The Radical SAM core domain occupies 113–346 (HDYGNSVCVT…ATIRREQGSD (234 aa)). Cysteine 120 and cysteine 351 are joined by a disulfide. The [4Fe-4S] cluster site is built by cysteine 127, cysteine 131, and cysteine 134. S-adenosyl-L-methionine-binding positions include 177–178 (GE), serine 209, 232–234 (SLH), and asparagine 308. Cysteine 351 serves as the catalytic S-methylcysteine intermediate.

It belongs to the radical SAM superfamily. RlmN family. Requires [4Fe-4S] cluster as cofactor.

It is found in the cytoplasm. The catalysed reaction is adenosine(2503) in 23S rRNA + 2 reduced [2Fe-2S]-[ferredoxin] + 2 S-adenosyl-L-methionine = 2-methyladenosine(2503) in 23S rRNA + 5'-deoxyadenosine + L-methionine + 2 oxidized [2Fe-2S]-[ferredoxin] + S-adenosyl-L-homocysteine. It catalyses the reaction adenosine(37) in tRNA + 2 reduced [2Fe-2S]-[ferredoxin] + 2 S-adenosyl-L-methionine = 2-methyladenosine(37) in tRNA + 5'-deoxyadenosine + L-methionine + 2 oxidized [2Fe-2S]-[ferredoxin] + S-adenosyl-L-homocysteine. Specifically methylates position 2 of adenine 2503 in 23S rRNA and position 2 of adenine 37 in tRNAs. Confers resistance to some classes of antibiotics. The protein is Probable dual-specificity RNA methyltransferase RlmN of Staphylococcus aureus (strain MW2).